The chain runs to 246 residues: Putative 4'-phosphopantetheinyl transferase slr0495 (246 aa).

2 residues coordinate Mg(2+): aspartate 110 and glutamate 156.

This sequence belongs to the P-Pant transferase superfamily. Gsp/Sfp/HetI/AcpT family. The cofactor is Mg(2+).

Its function is as follows. Probably transfers the 4'-phosphopantetheine moiety from coenzyme A (CoA) to a serine residue of a carrier protein domain. The sequence is that of Putative 4'-phosphopantetheinyl transferase slr0495 from Synechocystis sp. (strain ATCC 27184 / PCC 6803 / Kazusa).